We begin with the raw amino-acid sequence, 375 residues long: L-asparaginase 2 (375 aa).

A signal peptide spans 1-19 (MKKQRMLVLFTALLFVFTG). A disordered region spans residues 22–46 (HSPETKESPKEKAQTQKVSSASASE). Positions 24–35 (PETKESPKEKAQ) are enriched in basic and acidic residues. Positions 51–375 (PNIRILATGG…QKIQAYFNEY (325 aa)) constitute an Asparaginase/glutaminase domain. The O-isoaspartyl threonine intermediate role is filled by Thr-61. Residues Ser-108 and 141-142 (TD) each bind substrate.

This sequence belongs to the asparaginase 1 family. As to quaternary structure, homotetramer.

The enzyme catalyses L-asparagine + H2O = L-aspartate + NH4(+). Its function is as follows. Catalyzes the conversion of L-asparagine to L-aspartate and ammonium. This is L-asparaginase 2 (ansZ) from Bacillus subtilis (strain 168).